The chain runs to 1284 residues: DNA topoisomerase 2, mitochondrial (1284 aa).

The N-terminal 35 residues, 1-35 (MSKLLNNNNHKNLTNYLKFGKGIINNLNNKSKQVG), are a transit peptide targeting the mitochondrion. ATP is bound by residues asparagine 183, asparagine 212, 240 to 242 (GSN), and 253 to 260 (GRNGFGAK). The interaction with DNA stretch occupies residues 445-447 (KKK). 478 to 480 (QSK) lines the ATP pocket. Positions 560-677 (CTLIITEGDS…NLLKRGFLVE (118 aa)) constitute a Toprim domain. Glutamate 566, aspartate 646, and aspartate 648 together coordinate Mg(2+). Residues 810–1232 (IPSLIDGLKP…DPKSLWTADL (423 aa)) form the Topo IIA-type catalytic domain. Tyrosine 900 serves as the catalytic O-(5'-phospho-DNA)-tyrosine intermediate. The disordered stretch occupies residues 1245 to 1284 (EFQKKPLKTSSSSSFDVSSSSESAKLSSTRKSKTDKIKSK). Residues 1254–1271 (SSSSSFDVSSSSESAKLS) show a composition bias toward low complexity.

It belongs to the type II topoisomerase family. Homodimer. Mg(2+) is required as a cofactor. Mn(2+) serves as cofactor. The cofactor is Ca(2+).

It is found in the mitochondrion. The enzyme catalyses ATP-dependent breakage, passage and rejoining of double-stranded DNA.. In terms of biological role, control of topological states of DNA by transient breakage and subsequent rejoining of DNA strands. Topoisomerase II makes double-strand breaks. The chain is DNA topoisomerase 2, mitochondrial (top2mt) from Dictyostelium discoideum (Social amoeba).